The primary structure comprises 344 residues: Methionine import ATP-binding protein MetN (344 aa).

Positions 2 to 241 (IEIKSVNKVF…PKTELAHQFI (240 aa)) constitute an ABC transporter domain. 38-45 (GSSGAGKS) contributes to the ATP binding site.

The protein belongs to the ABC transporter superfamily. Methionine importer (TC 3.A.1.24) family. As to quaternary structure, the complex is composed of two ATP-binding proteins (MetN), two transmembrane proteins (MetI) and a solute-binding protein (MetQ).

It is found in the cell inner membrane. The enzyme catalyses L-methionine(out) + ATP + H2O = L-methionine(in) + ADP + phosphate + H(+). It carries out the reaction D-methionine(out) + ATP + H2O = D-methionine(in) + ADP + phosphate + H(+). Part of the ABC transporter complex MetNIQ involved in methionine import. Responsible for energy coupling to the transport system. The chain is Methionine import ATP-binding protein MetN from Vibrio cholerae serotype O1 (strain ATCC 39315 / El Tor Inaba N16961).